A 154-amino-acid chain; its full sequence is 3-hydroxyacyl-[acyl-carrier-protein] dehydratase FabZ (154 aa).

His-60 is an active-site residue.

Belongs to the thioester dehydratase family. FabZ subfamily.

It is found in the cytoplasm. The enzyme catalyses a (3R)-hydroxyacyl-[ACP] = a (2E)-enoyl-[ACP] + H2O. In terms of biological role, involved in unsaturated fatty acids biosynthesis. Catalyzes the dehydration of short chain beta-hydroxyacyl-ACPs and long chain saturated and unsaturated beta-hydroxyacyl-ACPs. The chain is 3-hydroxyacyl-[acyl-carrier-protein] dehydratase FabZ from Haemophilus ducreyi (strain 35000HP / ATCC 700724).